The primary structure comprises 1461 residues: Selection and upkeep of intraepithelial T-cells protein 5 (1461 aa).

An N-terminal signal peptide occupies residues 1–24; it reads MGAVGIPLTAHCVVLFLLQMVALS. Topologically, residues 25-1306 are extracellular; that stretch reads SEQFTVNGLE…CNKRNPFWKK (1282 aa). The Ig-like V-type domain occupies 26 to 139; the sequence is EQFTVNGLES…FYEEHIIDVK (114 aa). Intrachain disulfides connect C49/C123 and C163/C217. In terms of domain architecture, Ig-like C1-type spans 142-231; sequence ATSSDIQILM…FVTHQEESIS (90 aa). An N-linked (GlcNAc...) asparagine glycan is attached at N200. Residues 1307–1327 traverse the membrane as a helical segment; sequence YALDLGISVFTIIVVTLIMHL. Topologically, residues 1328-1345 are cytoplasmic; that stretch reads KQREADQHFELNTLWSKD. Residues 1346–1366 traverse the membrane as a helical segment; the sequence is TSVILCVLIMFNNRLKALIYF. Topologically, residues 1367–1387 are extracellular; sequence RLYGFSPPGKAHKYIVNYILR. A helical transmembrane segment spans residues 1388 to 1408; that stretch reads FSHPVFCIVYSATILYMYLQI. Topologically, residues 1409–1427 are cytoplasmic; that stretch reads QNKDSLFSLYNSWMVEMEM. The chain crosses the membrane as a helical span at residues 1428-1448; it reads VLIFLLVIFNVKNIATVLLYF. Residues 1449–1461 are Extracellular-facing; the sequence is DSTTLRLFFWIKG.

The protein belongs to the SKINT family. Expressed in skin and, to a lower extent, testis.

It localises to the membrane. Functionally, may act by engaging a cell surface molecule on immature T-cells in the embryonic thymus. The sequence is that of Selection and upkeep of intraepithelial T-cells protein 5 (Skint5) from Mus musculus (Mouse).